The sequence spans 59 residues: Large ribosomal subunit protein bL32c (59 aa).

Positions 37–59 (SRSFSSGNEHPKPKGFSGQQTNK) are disordered.

Belongs to the bacterial ribosomal protein bL32 family.

It localises to the plastid. It is found in the chloroplast. In Hordeum vulgare (Barley), this protein is Large ribosomal subunit protein bL32c.